A 195-amino-acid chain; its full sequence is dCTP deaminase, dUMP-forming (195 aa).

Residues 105–110 (RSSLGR), D123, 131–133 (TLE), Q152, Y166, K173, and Q177 each bind dCTP. Catalysis depends on E133, which acts as the Proton donor/acceptor. Residues 161-195 (PADRPYGDERGSKYQDQDGPQASRIRGDREFGGTQ) are disordered. A compositionally biased stretch (basic and acidic residues) spans 165–176 (PYGDERGSKYQD). Residues 185–195 (IRGDREFGGTQ) show a composition bias toward basic and acidic residues.

It belongs to the dCTP deaminase family. In terms of assembly, homotrimer.

It carries out the reaction dCTP + 2 H2O = dUMP + NH4(+) + diphosphate. The protein operates within pyrimidine metabolism; dUMP biosynthesis; dUMP from dCTP: step 1/1. In terms of biological role, bifunctional enzyme that catalyzes both the deamination of dCTP to dUTP and the hydrolysis of dUTP to dUMP without releasing the toxic dUTP intermediate. This is dCTP deaminase, dUMP-forming from Halobacterium salinarum (strain ATCC 700922 / JCM 11081 / NRC-1) (Halobacterium halobium).